Here is a 192-residue protein sequence, read N- to C-terminus: Small ribosomal subunit protein uS5 (192 aa).

In terms of domain architecture, S5 DRBM spans 20-83 (FVDKLVHINR…EAAKRGLIRV (64 aa)). The interval 162–192 (SVAARRGLKVSALQARRRDADPADTSEAAVA) is disordered.

The protein belongs to the universal ribosomal protein uS5 family. In terms of assembly, part of the 30S ribosomal subunit. Contacts proteins S4 and S8.

Functionally, with S4 and S12 plays an important role in translational accuracy. Its function is as follows. Located at the back of the 30S subunit body where it stabilizes the conformation of the head with respect to the body. In Methylorubrum extorquens (strain CM4 / NCIMB 13688) (Methylobacterium extorquens), this protein is Small ribosomal subunit protein uS5.